Consider the following 274-residue polypeptide: NH(3)-dependent NAD(+) synthetase (274 aa).

46–53 contributes to the ATP binding site; the sequence is GISGGQDS. D52 serves as a coordination point for Mg(2+). R140 contacts deamido-NAD(+). Residue T160 participates in ATP binding. Position 165 (E165) interacts with Mg(2+). K173 and D180 together coordinate deamido-NAD(+). ATP contacts are provided by K189 and T211. 260–261 is a binding site for deamido-NAD(+); it reads HK.

It belongs to the NAD synthetase family. As to quaternary structure, homodimer.

The enzyme catalyses deamido-NAD(+) + NH4(+) + ATP = AMP + diphosphate + NAD(+) + H(+). The protein operates within cofactor biosynthesis; NAD(+) biosynthesis; NAD(+) from deamido-NAD(+) (ammonia route): step 1/1. Catalyzes the ATP-dependent amidation of deamido-NAD to form NAD. Uses ammonia as a nitrogen source. The protein is NH(3)-dependent NAD(+) synthetase of Nocardia farcinica (strain IFM 10152).